The following is an 869-amino-acid chain: DNA mismatch repair protein MutS (869 aa).

An ATP-binding site is contributed by 602-609 (GPNMSGKS).

Belongs to the DNA mismatch repair MutS family.

In terms of biological role, this protein is involved in the repair of mismatches in DNA. It is possible that it carries out the mismatch recognition step. This protein has a weak ATPase activity. This is DNA mismatch repair protein MutS from Staphylococcus carnosus (strain TM300).